A 372-amino-acid chain; its full sequence is Maltose/maltodextrin import ATP-binding protein MalK (372 aa).

The ABC transporter domain occupies 4–234 (VTLKNVCKAY…PQNRFVAGFI (231 aa)). 36 to 43 (GPSGCGKS) is an ATP binding site.

It belongs to the ABC transporter superfamily. Maltooligosaccharide importer (TC 3.A.1.1.1) family. The complex is composed of two ATP-binding proteins (MalK), two transmembrane proteins (MalG and MalK) and a solute-binding protein (MalE).

Its subcellular location is the cell inner membrane. The enzyme catalyses D-maltose(out) + ATP + H2O = D-maltose(in) + ADP + phosphate + H(+). In terms of biological role, part of the ABC transporter complex MalEFGK involved in maltose/maltodextrin import. Responsible for energy coupling to the transport system. The protein is Maltose/maltodextrin import ATP-binding protein MalK of Vibrio parahaemolyticus serotype O3:K6 (strain RIMD 2210633).